The primary structure comprises 246 residues: UDP-N-acetyl-D-mannosaminuronic acid transferase (246 aa).

The protein belongs to the glycosyltransferase 26 family.

The catalysed reaction is UDP-N-acetyl-alpha-D-mannosaminouronate + N-acetyl-alpha-D-glucosaminyl-di-trans,octa-cis-undecaprenyl diphosphate = beta-D-ManNAcA-(1-&gt;4)-alpha-D-GlcNAc-di-trans,octa-cis-undecaprenyl diphosphate + UDP + H(+). Its pathway is bacterial outer membrane biogenesis; enterobacterial common antigen biosynthesis. In terms of biological role, catalyzes the synthesis of Und-PP-GlcNAc-ManNAcA (Lipid II), the second lipid-linked intermediate involved in enterobacterial common antigen (ECA) synthesis. This Shigella flexneri protein is UDP-N-acetyl-D-mannosaminuronic acid transferase.